Consider the following 191-residue polypeptide: Leucyl/phenylalanyl-tRNA--protein transferase (191 aa).

This sequence belongs to the L/F-transferase family.

It localises to the cytoplasm. The catalysed reaction is N-terminal L-lysyl-[protein] + L-leucyl-tRNA(Leu) = N-terminal L-leucyl-L-lysyl-[protein] + tRNA(Leu) + H(+). The enzyme catalyses N-terminal L-arginyl-[protein] + L-leucyl-tRNA(Leu) = N-terminal L-leucyl-L-arginyl-[protein] + tRNA(Leu) + H(+). It carries out the reaction L-phenylalanyl-tRNA(Phe) + an N-terminal L-alpha-aminoacyl-[protein] = an N-terminal L-phenylalanyl-L-alpha-aminoacyl-[protein] + tRNA(Phe). Functionally, functions in the N-end rule pathway of protein degradation where it conjugates Leu, Phe and, less efficiently, Met from aminoacyl-tRNAs to the N-termini of proteins containing an N-terminal arginine or lysine. The polypeptide is Leucyl/phenylalanyl-tRNA--protein transferase (Trichormus variabilis (strain ATCC 29413 / PCC 7937) (Anabaena variabilis)).